The sequence spans 482 residues: tRNA sulfurtransferase (482 aa).

The region spanning 61–165 (LAIRDALTRI…DDRLLLIKGR (105 aa)) is the THUMP domain. Residues 183 to 184 (LI), K265, G287, and Q296 contribute to the ATP site. The cysteines at positions 344 and 456 are disulfide-linked. The Rhodanese domain occupies 404-482 (FGPNDVILDI…GFNNVKVYRP (79 aa)). C456 acts as the Cysteine persulfide intermediate in catalysis.

This sequence belongs to the ThiI family.

Its subcellular location is the cytoplasm. It catalyses the reaction [ThiI sulfur-carrier protein]-S-sulfanyl-L-cysteine + a uridine in tRNA + 2 reduced [2Fe-2S]-[ferredoxin] + ATP + H(+) = [ThiI sulfur-carrier protein]-L-cysteine + a 4-thiouridine in tRNA + 2 oxidized [2Fe-2S]-[ferredoxin] + AMP + diphosphate. The enzyme catalyses [ThiS sulfur-carrier protein]-C-terminal Gly-Gly-AMP + S-sulfanyl-L-cysteinyl-[cysteine desulfurase] + AH2 = [ThiS sulfur-carrier protein]-C-terminal-Gly-aminoethanethioate + L-cysteinyl-[cysteine desulfurase] + A + AMP + 2 H(+). It functions in the pathway cofactor biosynthesis; thiamine diphosphate biosynthesis. In terms of biological role, catalyzes the ATP-dependent transfer of a sulfur to tRNA to produce 4-thiouridine in position 8 of tRNAs, which functions as a near-UV photosensor. Also catalyzes the transfer of sulfur to the sulfur carrier protein ThiS, forming ThiS-thiocarboxylate. This is a step in the synthesis of thiazole, in the thiamine biosynthesis pathway. The sulfur is donated as persulfide by IscS. In Escherichia coli O45:K1 (strain S88 / ExPEC), this protein is tRNA sulfurtransferase.